Here is a 506-residue protein sequence, read N- to C-terminus: Phase 2 flagellin (506 aa).

Belongs to the bacterial flagellin family.

Its subcellular location is the secreted. The protein localises to the bacterial flagellum. In terms of biological role, flagellin is the subunit protein which polymerizes to form the filaments of bacterial flagella. The protein is Phase 2 flagellin (fljB) of Salmonella typhimurium (strain LT2 / SGSC1412 / ATCC 700720).